A 183-amino-acid chain; its full sequence is Glutathione-regulated potassium-efflux system ancillary protein KefG (183 aa).

The protein belongs to the NAD(P)H dehydrogenase (quinone) family. KefG subfamily. As to quaternary structure, interacts with KefB.

The protein localises to the cell inner membrane. It catalyses the reaction a quinone + NADH + H(+) = a quinol + NAD(+). The enzyme catalyses a quinone + NADPH + H(+) = a quinol + NADP(+). Functionally, regulatory subunit of a potassium efflux system that confers protection against electrophiles. Required for full activity of KefB. This is Glutathione-regulated potassium-efflux system ancillary protein KefG from Salmonella paratyphi B (strain ATCC BAA-1250 / SPB7).